Reading from the N-terminus, the 68-residue chain is Sec-independent protein translocase protein TatA (68 aa).

Residues 1-21 form a helical membrane-spanning segment; the sequence is MGSFSIWHWLIVLVVVLLLFG. The segment at 46-68 is disordered; the sequence is EEAASADKTIDGKTVEHKSDEVR. A compositionally biased stretch (basic and acidic residues) spans 53 to 68; sequence KTIDGKTVEHKSDEVR.

It belongs to the TatA/E family. In terms of assembly, the Tat system comprises two distinct complexes: a TatABC complex, containing multiple copies of TatA, TatB and TatC subunits, and a separate TatA complex, containing only TatA subunits. Substrates initially bind to the TatABC complex, which probably triggers association of the separate TatA complex to form the active translocon.

It is found in the cell inner membrane. Functionally, part of the twin-arginine translocation (Tat) system that transports large folded proteins containing a characteristic twin-arginine motif in their signal peptide across membranes. TatA could form the protein-conducting channel of the Tat system. The protein is Sec-independent protein translocase protein TatA of Sinorhizobium fredii (strain NBRC 101917 / NGR234).